Reading from the N-terminus, the 83-residue chain is ATP synthase subunit c, chloroplastic (83 aa).

2 helical membrane-spanning segments follow: residues 4-24 (IISA…AIGP) and 57-77 (LAFM…LLFA).

This sequence belongs to the ATPase C chain family. As to quaternary structure, F-type ATPases have 2 components, F(1) - the catalytic core - and F(0) - the membrane proton channel. F(1) has five subunits: alpha(3), beta(3), gamma(1), delta(1), epsilon(1). F(0) has four main subunits: a(1), b(1), b'(1) and c(10-14). The alpha and beta chains form an alternating ring which encloses part of the gamma chain. F(1) is attached to F(0) by a central stalk formed by the gamma and epsilon chains, while a peripheral stalk is formed by the delta, b and b' chains.

The protein localises to the plastid. Its subcellular location is the chloroplast thylakoid membrane. In terms of biological role, f(1)F(0) ATP synthase produces ATP from ADP in the presence of a proton or sodium gradient. F-type ATPases consist of two structural domains, F(1) containing the extramembraneous catalytic core and F(0) containing the membrane proton channel, linked together by a central stalk and a peripheral stalk. During catalysis, ATP synthesis in the catalytic domain of F(1) is coupled via a rotary mechanism of the central stalk subunits to proton translocation. Key component of the F(0) channel; it plays a direct role in translocation across the membrane. A homomeric c-ring of between 10-14 subunits forms the central stalk rotor element with the F(1) delta and epsilon subunits. This chain is ATP synthase subunit c, chloroplastic, found in Galdieria sulphuraria (Red alga).